A 139-amino-acid polypeptide reads, in one-letter code: Nucleoside diphosphate kinase (139 aa).

ATP-binding residues include K10, F58, R86, T92, R103, and N113. Residue H116 is the Pros-phosphohistidine intermediate of the active site.

The protein belongs to the NDK family. As to quaternary structure, homotetramer. Requires Mg(2+) as cofactor.

The protein localises to the cytoplasm. It carries out the reaction a 2'-deoxyribonucleoside 5'-diphosphate + ATP = a 2'-deoxyribonucleoside 5'-triphosphate + ADP. The enzyme catalyses a ribonucleoside 5'-diphosphate + ATP = a ribonucleoside 5'-triphosphate + ADP. Major role in the synthesis of nucleoside triphosphates other than ATP. The ATP gamma phosphate is transferred to the NDP beta phosphate via a ping-pong mechanism, using a phosphorylated active-site intermediate. This Oleidesulfovibrio alaskensis (strain ATCC BAA-1058 / DSM 17464 / G20) (Desulfovibrio alaskensis) protein is Nucleoside diphosphate kinase.